The primary structure comprises 389 residues: Zip homologous protein 3 (389 aa).

The RING-type zinc-finger motif lies at 6 to 43 (CNKCFNRKPPDGFFISSCFHIFCTKCAKADLAVCLICK). Residues 123–164 (LAEATAWIQMAEKKLQASEEERVKAEREIEECQAKLKSMTNL) adopt a coiled-coil conformation. Positions 366-389 (ISSQPGYLAQRKPINGRSFIGPAD) are disordered.

Interacts with zhp-4; the interaction is required for their localization along paired chromosomes and stability, and for the formation of chiasma during meiotic recombination. In terms of tissue distribution, expressed througout the gonad (at protein level). Expressed in the germline.

It is found in the chromosome. Recruited co-dependently with zhp-4 to the synaptonemal complex between homologous chromosome pairs to regulate the formation and number of crossover events between homologs during meiotic recombination. In the early stages of pachytene, in complex with zhp-4, recruited by the zhp-1-zhp-2 heterodimer to designated crossover sites along the homolog pair to stabilize other pro-crossover factors such as rmh-1, msh-5 and cosa-1. This in turn facilitates crossover and promotes the formation of chiasma in each meiotic nucleus at the late pachytene stage of meiosis. Plays a role in the segregation of homologous chromosomes following the completion of crossovers. Together with him-14 and msh-5 plays a role in the activation of DNA damage-dependent apoptosis at the DNA damage checkpoint in pachytene cells. This Caenorhabditis elegans protein is Zip homologous protein 3.